The chain runs to 126 residues: Fluoride-specific ion channel FluC (126 aa).

The next 4 membrane-spanning stretches (helical) occupy residues 4–24 (ILAIALGAAIGANLRYGIGLW), 35–55 (YGTFIINLLGCLGIGLLLTLI), 68–88 (MLVTGLLGGFTTFSTFGYESF), and 100–120 (IGYMVGSVVGGLIAVIIGVGL). Residues glycine 75 and threonine 78 each coordinate Na(+).

The protein belongs to the fluoride channel Fluc/FEX (TC 1.A.43) family.

It localises to the cell membrane. The catalysed reaction is fluoride(in) = fluoride(out). Na(+) is not transported, but it plays an essential structural role and its presence is essential for fluoride channel function. Fluoride-specific ion channel. Important for reducing fluoride concentration in the cell, thus reducing its toxicity. The sequence is that of Fluoride-specific ion channel FluC from Chloroflexus aurantiacus (strain ATCC 29366 / DSM 635 / J-10-fl).